A 458-amino-acid chain; its full sequence is MKLWGGRFTKETNELVNNFNASISFDQKFYKQDIEGSIAHATMLGKQGIIPESESEQIVEGLKGILADIESGKLEITDEYEDIHTFMEATLIERIGDAGKRLHTGRSRNDQVALDMRLFTRQEVLNTDAELKELMAVILRIMKENTHTFMPGFTHLQKAQPVTVAHHFGAYFEMFKRDRSRLHDIYERMNYCPLGAGALAGTTYPLDRELTASLLGFYGPTLNSMDSVSDRDYLIEFLSALSTIMMHLSRFSEEICIWNSNEYRFIELDDAFSTGSSIMPQKKNPDIAELVRGKTGRVYGALISLLTTMKGIPLAYNKDMQEDKELSFDAFDTAKGCISLFKGMIDTMKFNNKRMEASAKNGFTNATDAADYLVKKGVPFREAHGIVGQLVLMCIEKNIALDDLSLDEYKAVSPVFDEDIYEAISLQTCVDKRLTLGAPGPEVMNKVIAIYDKYMEEN.

It belongs to the lyase 1 family. Argininosuccinate lyase subfamily.

The protein localises to the cytoplasm. The catalysed reaction is 2-(N(omega)-L-arginino)succinate = fumarate + L-arginine. It functions in the pathway amino-acid biosynthesis; L-arginine biosynthesis; L-arginine from L-ornithine and carbamoyl phosphate: step 3/3. The polypeptide is Argininosuccinate lyase (Lachnospira eligens (strain ATCC 27750 / DSM 3376 / VPI C15-48 / C15-B4) (Eubacterium eligens)).